The chain runs to 279 residues: NADPH-dependent 7-cyano-7-deazaguanine reductase (279 aa).

86-88 (IES) contacts substrate. 88–89 (SK) is an NADPH binding site. Residue Cys-187 is the Thioimide intermediate of the active site. Asp-194 acts as the Proton donor in catalysis. Substrate is bound at residue 226–227 (HE). Position 255-256 (255-256 (RG)) interacts with NADPH.

The protein belongs to the GTP cyclohydrolase I family. QueF type 2 subfamily. As to quaternary structure, homodimer.

The protein resides in the cytoplasm. It catalyses the reaction 7-aminomethyl-7-carbaguanine + 2 NADP(+) = 7-cyano-7-deazaguanine + 2 NADPH + 3 H(+). It participates in tRNA modification; tRNA-queuosine biosynthesis. Catalyzes the NADPH-dependent reduction of 7-cyano-7-deazaguanine (preQ0) to 7-aminomethyl-7-deazaguanine (preQ1). The chain is NADPH-dependent 7-cyano-7-deazaguanine reductase from Haemophilus ducreyi (strain 35000HP / ATCC 700724).